We begin with the raw amino-acid sequence, 643 residues long: Maternal embryonic leucine zipper kinase (643 aa).

The Protein kinase domain maps to tyrosine 11–valine 263. ATP-binding positions include isoleucine 17–valine 25 and lysine 40. At threonine 56 the chain carries Phosphothreonine; by autocatalysis. Aspartate 132 (proton acceptor) is an active-site residue. Tyrosine 163 is modified (phosphotyrosine; by autocatalysis). Threonine 167 bears the Phosphothreonine; by autocatalysis mark. A phosphoserine; by autocatalysis mark is found at serine 171 and serine 253. The tract at residues leucine 282–leucine 321 is UBA-like. Residues arginine 326 to methionine 643 form an autoinhibitory region region. 2 positions are modified to phosphoserine; by autocatalysis: serine 336 and serine 343. Serine 352 carries the post-translational modification Phosphoserine. Residues serine 399 and serine 423 each carry the phosphoserine; by autocatalysis modification. Position 486 is a phosphothreonine; by autocatalysis (threonine 486). Serine 490 carries the phosphoserine modification. Serine 497 carries the phosphoserine; by autocatalysis modification. A Phosphothreonine modification is found at threonine 510. Serine 521 bears the Phosphoserine; by autocatalysis mark. Threonine 531 is subject to Phosphothreonine; by autocatalysis. Positions serine 594–methionine 643 constitute a KA1 domain.

Belongs to the protein kinase superfamily. CAMK Ser/Thr protein kinase family. SNF1 subfamily. Monomer. Interacts with ZNF622 and PPP1R8. Post-translationally, autophosphorylated: autophosphorylation of the T-loop at Thr-167 and Ser-171 is required for activation. Expressed in testis, ovary, thymus, spleen and T-cell. Expressed by neural progenitors: highly enriched in cultures containing multipotent progenitors.

The protein localises to the cell membrane. The catalysed reaction is L-tyrosyl-[protein] + ATP = O-phospho-L-tyrosyl-[protein] + ADP + H(+). It carries out the reaction L-seryl-[protein] + ATP = O-phospho-L-seryl-[protein] + ADP + H(+). The enzyme catalyses L-threonyl-[protein] + ATP = O-phospho-L-threonyl-[protein] + ADP + H(+). Activated by autophosphorylation of the T-loop at Thr-167 and Ser-171: in contrast to other members of the SNF1 subfamily, phosphorylation at Thr-167 is not mediated by STK11/LKB1 but via autophosphorylation instead. Inhibited by calcium-binding. Kinase activity is also regulated by reducing agents: dithiothreitol (DTT) or reduced glutathione are required for kinase activity in vitro; such dependence is however not due to the presence of disulfide bonds. Functionally, serine/threonine-protein kinase involved in various processes such as cell cycle regulation, self-renewal of stem cells, apoptosis and splicing regulation. Has a broad substrate specificity; phosphorylates BCL2L14, CDC25B, MAP3K5/ASK1 and ZNF622. Acts as an activator of apoptosis by phosphorylating and activating MAP3K5/ASK1. Acts as a regulator of cell cycle, notably by mediating phosphorylation of CDC25B, promoting localization of CDC25B to the centrosome and the spindle poles during mitosis. Plays a key role in cell proliferation. Required for proliferation of embryonic and postnatal multipotent neural progenitors. Phosphorylates and inhibits BCL2L14. Also involved in the inhibition of spliceosome assembly during mitosis by phosphorylating ZNF622, thereby contributing to its redirection to the nucleus. May also play a role in primitive hematopoiesis. The sequence is that of Maternal embryonic leucine zipper kinase (Melk) from Mus musculus (Mouse).